Here is a 389-residue protein sequence, read N- to C-terminus: Chorismate synthase (389 aa).

NADP(+)-binding residues include Arg40 and Arg46. FMN contacts are provided by residues 131–133 (RSS), 252–253 (NA), Gly297, 312–316 (KPIPT), and Arg338.

It belongs to the chorismate synthase family. As to quaternary structure, homotetramer. FMNH2 serves as cofactor.

The catalysed reaction is 5-O-(1-carboxyvinyl)-3-phosphoshikimate = chorismate + phosphate. Its pathway is metabolic intermediate biosynthesis; chorismate biosynthesis; chorismate from D-erythrose 4-phosphate and phosphoenolpyruvate: step 7/7. Functionally, catalyzes the anti-1,4-elimination of the C-3 phosphate and the C-6 proR hydrogen from 5-enolpyruvylshikimate-3-phosphate (EPSP) to yield chorismate, which is the branch point compound that serves as the starting substrate for the three terminal pathways of aromatic amino acid biosynthesis. This reaction introduces a second double bond into the aromatic ring system. The chain is Chorismate synthase from Lactiplantibacillus plantarum (strain ATCC BAA-793 / NCIMB 8826 / WCFS1) (Lactobacillus plantarum).